The primary structure comprises 692 residues: Elongation factor G (692 aa).

Residues 8 to 283 (QDLRNIGIVA…AVVDYLPSPL (276 aa)) form the tr-type G domain. GTP contacts are provided by residues 17–24 (AHIDAGKT), 81–85 (DTPGH), and 135–138 (NKLD).

Belongs to the TRAFAC class translation factor GTPase superfamily. Classic translation factor GTPase family. EF-G/EF-2 subfamily.

The protein resides in the cytoplasm. Catalyzes the GTP-dependent ribosomal translocation step during translation elongation. During this step, the ribosome changes from the pre-translocational (PRE) to the post-translocational (POST) state as the newly formed A-site-bound peptidyl-tRNA and P-site-bound deacylated tRNA move to the P and E sites, respectively. Catalyzes the coordinated movement of the two tRNA molecules, the mRNA and conformational changes in the ribosome. The chain is Elongation factor G from Hydrogenobaculum sp. (strain Y04AAS1).